A 158-amino-acid chain; its full sequence is Succinate dehydrogenase assembly factor 2, mitochondrial (158 aa).

The N-terminal 17 residues, 1–17 (MFSANIARKVVCSVCRA), are a transit peptide targeting the mitochondrion.

This sequence belongs to the SDHAF2 family. As to quaternary structure, interacts with sdha within the SDH catalytic dimer.

Its subcellular location is the mitochondrion matrix. Plays an essential role in the assembly of succinate dehydrogenase (SDH), an enzyme complex (also referred to as respiratory complex II) that is a component of both the tricarboxylic acid (TCA) cycle and the mitochondrial electron transport chain, and which couples the oxidation of succinate to fumarate with the reduction of ubiquinone (coenzyme Q) to ubiquinol. Required for flavinylation (covalent attachment of FAD) of the flavoprotein subunit sdha of the SDH catalytic dimer. The polypeptide is Succinate dehydrogenase assembly factor 2, mitochondrial (Danio rerio (Zebrafish)).